The primary structure comprises 300 residues: Regulatory protein NocR (300 aa).

In terms of domain architecture, HTH lysR-type spans 1 to 59 (MIQSRQLEAFRPVMLTGGMTSAANLVRITQPAISRLIRDLEEEIGISLFERTGNRLRPT). The H-T-H motif DNA-binding region spans 19–38 (MTSAANLVRITQPAISRLIR).

Belongs to the LysR transcriptional regulatory family.

In terms of biological role, positive regulatory protein for the noc operon involved in nopaline catabolism and uptake. This chain is Regulatory protein NocR (nocR), found in Agrobacterium tumefaciens (strain T37).